The following is a 787-amino-acid chain: Formate acetyltransferase (787 aa).

Residues 8–629 (NIFEQAWDGF…GNSPVHKGVF (622 aa)) enclose the PFL domain. The active-site S-acetylcysteine intermediate is the Cys-416. Residue Cys-417 is the Cysteine radical intermediate of the active site. The Glycine radical domain occupies 645–774 (SPGANPSNKA…LTERVFHEVL (130 aa)). Gly-749 is modified (glycine radical).

The protein belongs to the glycyl radical enzyme (GRE) family. PFL subfamily. Homodimer.

Its subcellular location is the cytoplasm. The catalysed reaction is formate + acetyl-CoA = pyruvate + CoA. The protein operates within fermentation; pyruvate fermentation; formate from pyruvate: step 1/1. In Lactococcus lactis subsp. lactis (strain IL1403) (Streptococcus lactis), this protein is Formate acetyltransferase (pfl).